A 146-amino-acid polypeptide reads, in one-letter code: VHLTGEEKSAVTALWGKVNVDEVGGEALGRLLVVYPWTQRFFDSFGDLSSADAIMGNPKVKAHGKKVLNSFSDGLKNLDNLKGTFAKLSELHCDKLHVDPENFKLLGNVLVCVLAHHFGKEFTPQVQAAYQKVVAGVANALAHKYH.

At V1 the chain carries N-acetylvaline. One can recognise a Globin domain in the interval 2-146 (HLTGEEKSAV…VANALAHKYH (145 aa)). Position 12 is a phosphothreonine (T12). At S44 the chain carries Phosphoserine. At K59 the chain carries N6-acetyllysine. H63 provides a ligand contact to heme b. At K82 the chain carries N6-acetyllysine. Residue H92 coordinates heme b. At C93 the chain carries S-nitrosocysteine. At K144 the chain carries N6-acetyllysine.

The protein belongs to the globin family. As to quaternary structure, heterotetramer of two alpha chains and two beta chains. Red blood cells.

Functionally, involved in oxygen transport from the lung to the various peripheral tissues. This chain is Hemoglobin subunit beta (HBB), found in Phoca vitulina (Harbor seal).